A 161-amino-acid chain; its full sequence is GTP-dependent dephospho-CoA kinase (161 aa).

Residues Asp40, Val41, Val42, Asp59, and Glu112 each contribute to the GTP site.

Belongs to the GTP-dependent DPCK family.

The enzyme catalyses 3'-dephospho-CoA + GTP = GDP + CoA + H(+). It functions in the pathway cofactor biosynthesis; coenzyme A biosynthesis. Its function is as follows. Catalyzes the GTP-dependent phosphorylation of the 3'-hydroxyl group of dephosphocoenzyme A to form coenzyme A (CoA). The protein is GTP-dependent dephospho-CoA kinase of Methanoculleus marisnigri (strain ATCC 35101 / DSM 1498 / JR1).